A 106-amino-acid chain; its full sequence is CRISPR-associated endoribonuclease Cas2 (106 aa).

Mg(2+) is bound at residue D22.

Belongs to the CRISPR-associated endoribonuclease Cas2 protein family. As to quaternary structure, homodimer, forms a heterotetramer with a Cas1 homodimer. Mg(2+) is required as a cofactor.

Functionally, CRISPR (clustered regularly interspaced short palindromic repeat), is an adaptive immune system that provides protection against mobile genetic elements (viruses, transposable elements and conjugative plasmids). CRISPR clusters contain sequences complementary to antecedent mobile elements and target invading nucleic acids. CRISPR clusters are transcribed and processed into CRISPR RNA (crRNA). Functions as a ssRNA-specific endoribonuclease. Involved in the integration of spacer DNA into the CRISPR cassette. This Fusobacterium nucleatum subsp. nucleatum (strain ATCC 25586 / DSM 15643 / BCRC 10681 / CIP 101130 / JCM 8532 / KCTC 2640 / LMG 13131 / VPI 4355) protein is CRISPR-associated endoribonuclease Cas2.